The primary structure comprises 76 residues: Putative snRNP Sm-like protein (76 aa).

The 73-residue stretch at 4–76 (RPLDVIHRSL…VLAISPVDIE (73 aa)) folds into the Sm domain.

It belongs to the snRNP Sm proteins family.

This is Putative snRNP Sm-like protein from Thermococcus gammatolerans (strain DSM 15229 / JCM 11827 / EJ3).